Reading from the N-terminus, the 644-residue chain is Threonine--tRNA ligase (644 aa).

The TGS domain maps to 1 to 61; it reads MVAITLPDGS…AHDAKVEIVT (61 aa). Residues 242–533 form a catalytic region; the sequence is DHRKIGKALN…LIENYAGWMP (292 aa). Zn(2+) is bound by residues Cys333, His384, and His510.

This sequence belongs to the class-II aminoacyl-tRNA synthetase family. In terms of assembly, homodimer. The cofactor is Zn(2+).

The protein resides in the cytoplasm. The catalysed reaction is tRNA(Thr) + L-threonine + ATP = L-threonyl-tRNA(Thr) + AMP + diphosphate + H(+). Functionally, catalyzes the attachment of threonine to tRNA(Thr) in a two-step reaction: L-threonine is first activated by ATP to form Thr-AMP and then transferred to the acceptor end of tRNA(Thr). Also edits incorrectly charged L-seryl-tRNA(Thr). The protein is Threonine--tRNA ligase of Psychrobacter cryohalolentis (strain ATCC BAA-1226 / DSM 17306 / VKM B-2378 / K5).